The following is a 272-amino-acid chain: Homeobox protein SIX3 (272 aa).

The homeobox DNA-binding region spans 169–228 (GEQKTHCFKERTRGLLREWYLQDPYPNPGKKRELAHATGLTPTQVGNWFKNRRQRDRAAA). The tract at residues 244-272 (CTLSGGDSSERADGDTFLSVTDSDSDLDV) is disordered.

Belongs to the SIX/Sine oculis homeobox family. In terms of assembly, interacts with GMNN.

Its subcellular location is the nucleus. In terms of biological role, transcriptional regulator which can act as both a transcriptional repressor and activator by binding a ATTA homeodomain core recognition sequence on these target genes. During forebrain development represses WNT1 expression allowing zona limitans intrathalamica formation and thereby ensuring proper anterio-posterior patterning of the diencephalon and formation of the rostral diencephalon. Acts as a direct upstream activator of SHH expression in the rostral diencephalon ventral midline and that in turn SHH maintains its expression. In addition, Six3 activity is required for the formation of the telencephalon. During postnatal stages of brain development is necessary for ependymal cell maturation by promoting the maturation of radial glia into ependymal cells through regulation of neuroblast proliferation and migration. Acts on the proliferation and differentiation of neural progenitor cells through activating transcription of CCND1 and CCND2. During early lens formation plays a role in lens induction and specification by activating directly PAX6 in the presumptive lens ectoderm. In turn PAX6 activates SIX3 resulting in activation of PDGFRA and CCND1 promoting cell proliferation. Also is required for the neuroretina development by directly suppressing WNT8B expression in the anterior neural plate territory. Its action during retina development and lens morphogenesis is AES and TLE4-dependent manner. Furthermore, during eye development regulates several genes expression. Before and during early lens development represses the CRYGF promoter by binding a SIX repressor element. Directly activates RHO transcription, or cooperates with CRX or NRL. Six3 also functions in the formation of the proximodistal axis of the optic cup, and promotes the formation of optic vesicles-like structures. During pituitary development, acts in parallel or alternatively with HESX1 to control cell proliferation through Wnt/beta-catenin pathway. Plays a role in eye development by suppressing WNT1 expression and in dorsal-ventral patterning by repressing BMP signaling pathway. The chain is Homeobox protein SIX3 (six3) from Oryzias latipes (Japanese rice fish).